A 1236-amino-acid chain; its full sequence is ATP-dependent helicase/nuclease subunit A (1236 aa).

In terms of domain architecture, UvrD-like helicase ATP-binding spans 2–457 (AHWTIEQEEA…VDLNKNFRSH (456 aa)). 23–30 (AAAGSGKT) contacts ATP. The 302-residue stretch at 515–816 (NTAKRVEICI…RIMSIHKSKG (302 aa)) folds into the UvrD-like helicase C-terminal domain.

Belongs to the helicase family. AddA subfamily. As to quaternary structure, heterodimer of AddA and AddB/RexB. Mg(2+) serves as cofactor.

The catalysed reaction is Couples ATP hydrolysis with the unwinding of duplex DNA by translocating in the 3'-5' direction.. It carries out the reaction ATP + H2O = ADP + phosphate + H(+). Its function is as follows. The heterodimer acts as both an ATP-dependent DNA helicase and an ATP-dependent, dual-direction single-stranded exonuclease. Recognizes the chi site generating a DNA molecule suitable for the initiation of homologous recombination. The AddA nuclease domain is required for chi fragment generation; this subunit has the helicase and 3' -&gt; 5' nuclease activities. This Syntrophomonas wolfei subsp. wolfei (strain DSM 2245B / Goettingen) protein is ATP-dependent helicase/nuclease subunit A.